We begin with the raw amino-acid sequence, 308 residues long: MTEITAAMVKELREKSGAGMMDCKKALAENGGDMEASIDWLRAKGIAKADKKSGRTAAEGLIGIASSGTTAVVVEVNSETDFVARNDAFQDMVRGISNVALSTDGTVDSINAATYAATGKSVSDSIKDAIATIGENMALRRATQLKVEDGVVATYVHNAVADGLGKLGVLVALKSTGNKEALNTIGRQIAMHVAATNPLAVRAEEVDAAVAERERNVFIEQSRESGKPENIIEKMVEGRMRKFFEDVALLSQAFVINPDLTVAAALKEAEKDVGAPIEITGIARLLLGEGIEKEESDFAAEVAAVAKG.

The interval 80 to 83 is involved in Mg(2+) ion dislocation from EF-Tu; that stretch reads TDFV.

The protein belongs to the EF-Ts family.

Its subcellular location is the cytoplasm. Its function is as follows. Associates with the EF-Tu.GDP complex and induces the exchange of GDP to GTP. It remains bound to the aminoacyl-tRNA.EF-Tu.GTP complex up to the GTP hydrolysis stage on the ribosome. This is Elongation factor Ts from Allorhizobium ampelinum (strain ATCC BAA-846 / DSM 112012 / S4) (Agrobacterium vitis (strain S4)).